The following is a 499-amino-acid chain: Glycerol kinase (499 aa).

Thr12 serves as a coordination point for ADP. ATP is bound by residues Thr12, Thr13, and Ser14. Thr12 lines the sn-glycerol 3-phosphate pocket. Arg16 contacts ADP. Sn-glycerol 3-phosphate-binding residues include Arg82, Glu83, and Tyr134. Glycerol-binding residues include Arg82, Glu83, and Tyr134. Phosphohistidine; by HPr is present on His230. Asp244 is a sn-glycerol 3-phosphate binding site. Asp244 and Gln245 together coordinate glycerol. The ADP site is built by Thr266 and Gly309. Thr266, Gly309, Gln313, and Gly410 together coordinate ATP. Positions 410 and 414 each coordinate ADP.

It belongs to the FGGY kinase family. As to quaternary structure, homotetramer and homodimer (in equilibrium). Post-translationally, the phosphoenolpyruvate-dependent sugar phosphotransferase system (PTS), including enzyme I, and histidine-containing protein (HPr) are required for the phosphorylation, which leads to the activation of the enzyme.

It catalyses the reaction glycerol + ATP = sn-glycerol 3-phosphate + ADP + H(+). It functions in the pathway polyol metabolism; glycerol degradation via glycerol kinase pathway; sn-glycerol 3-phosphate from glycerol: step 1/1. With respect to regulation, activated by phosphorylation and inhibited by fructose 1,6-bisphosphate (FBP). Functionally, key enzyme in the regulation of glycerol uptake and metabolism. Catalyzes the phosphorylation of glycerol to yield sn-glycerol 3-phosphate. This Staphylococcus haemolyticus (strain JCSC1435) protein is Glycerol kinase.